We begin with the raw amino-acid sequence, 551 residues long: Probable NADH-ubiquinone oxidoreductase C947.15c, mitochondrial (551 aa).

The N-terminal 35 residues, 1-35 (MSVSKARLQSVVRLSRTVPYSKTMVRSFHVSCAVK), are a transit peptide targeting the mitochondrion. Position 92-122 (92-122 (NIVVLGSGWGAVAAIKNLDPSLYNITLVSPR)) interacts with FAD. 255–291 (LHITVVGGGPTGMEFAAEMQDFIDNDVKDMFPELQKD) is a binding site for NAD(+).

Belongs to the NADH dehydrogenase family.

The protein localises to the mitochondrion. The enzyme catalyses a quinone + NADH + H(+) = a quinol + NAD(+). It carries out the reaction a ubiquinone + NADH + H(+) = a ubiquinol + NAD(+). Catalyzes the oxidation of NADH. In Schizosaccharomyces pombe (strain 972 / ATCC 24843) (Fission yeast), this protein is Probable NADH-ubiquinone oxidoreductase C947.15c, mitochondrial.